The following is a 98-amino-acid chain: NADH-ubiquinone oxidoreductase chain 4L (98 aa).

Helical transmembrane passes span 1–21, 26–46, and 61–81; these read MPLISTNILLAFITALLGVLI, LMSSLLCLEGMMLSMFILVSL, and LILLVFAACEAAVGLALLVMV.

This sequence belongs to the complex I subunit 4L family. As to quaternary structure, core subunit of respiratory chain NADH dehydrogenase (Complex I) which is composed of 45 different subunits.

The protein localises to the mitochondrion inner membrane. The enzyme catalyses a ubiquinone + NADH + 5 H(+)(in) = a ubiquinol + NAD(+) + 4 H(+)(out). Functionally, core subunit of the mitochondrial membrane respiratory chain NADH dehydrogenase (Complex I) which catalyzes electron transfer from NADH through the respiratory chain, using ubiquinone as an electron acceptor. Part of the enzyme membrane arm which is embedded in the lipid bilayer and involved in proton translocation. This Nycticebus coucang (Slow loris) protein is NADH-ubiquinone oxidoreductase chain 4L (MT-ND4L).